The following is a 477-amino-acid chain: MAAKATGVVGKVRQVIGAVVDVQFGDHLPAILNALETTNVGNRLVLEVAQHLGENTVRCIAMDSTEGLVRGQEVRDTGAPITVPVGPGMLGRIINVIGEPVDEEGPVDAIEMRSIHQPAPTYVEQSTEAQILITGIKVLDLLAPYAKGGKIGLFGGAGVGKTVLIQELINNIAKAHGGYSVFAGVGERTREGNDLYHEFIESGVNKKGGGEGSKAALVYGQMNEPPGARARVGLTGLTVAEYFRDQGQDVLFFVDNIFRFTQAGSEVSALLGRIPSAVGYQPTLATDMGALQERITTTTKGSITSVQAIYVPADDLTDPAPATSFAHLDATTTLNRAIAEKGIYPAVDPLDSTSRMLDPMVVGEEHYAVARQVQSILQRYKSLQDIIAILGMDELSEEDKQTVARARKIERFLSQPFFVAEVFTGAPGKLVDLADTIKGFKGLCNGDYDHLPEAAFYMVGGIEEAVEKAQRLAAEAA.

155 to 162 contacts ATP; the sequence is GGAGVGKT.

Belongs to the ATPase alpha/beta chains family. F-type ATPases have 2 components, CF(1) - the catalytic core - and CF(0) - the membrane proton channel. CF(1) has five subunits: alpha(3), beta(3), gamma(1), delta(1), epsilon(1). CF(0) has three main subunits: a(1), b(2) and c(9-12). The alpha and beta chains form an alternating ring which encloses part of the gamma chain. CF(1) is attached to CF(0) by a central stalk formed by the gamma and epsilon chains, while a peripheral stalk is formed by the delta and b chains.

It localises to the cell inner membrane. It carries out the reaction ATP + H2O + 4 H(+)(in) = ADP + phosphate + 5 H(+)(out). Its function is as follows. Produces ATP from ADP in the presence of a proton gradient across the membrane. The catalytic sites are hosted primarily by the beta subunits. The polypeptide is ATP synthase subunit beta (Mesorhizobium japonicum (strain LMG 29417 / CECT 9101 / MAFF 303099) (Mesorhizobium loti (strain MAFF 303099))).